A 175-amino-acid polypeptide reads, in one-letter code: uncharacterized protein (175 aa).

Residues 1-11 (METWRKGSFRN) constitute a mitochondrion transit peptide. The disordered stretch occupies residues 24-92 (RRLRRQSSVL…PRLYRESSSC (69 aa)). The span at 41 to 63 (GDHEEYSNREVIRELQGRPDGRR) shows a compositional bias: basic and acidic residues.

Its subcellular location is the mitochondrion. This is an uncharacterized protein from Homo sapiens (Human).